A 396-amino-acid chain; its full sequence is Trypacidin cluster transcription factor (396 aa).

The segment at residues 20 to 47 (CRACGLSKVRCSKEKPTCSRCRRRGTVC) is a DNA-binding region (zn(2)-C6 fungal-type). 3 disordered regions span residues 54 to 120 (RPGR…LSTV), 190 to 218 (DPAP…ESEA), and 346 to 365 (MHGA…PAPL). A compositionally biased stretch (basic and acidic residues) spans 57–71 (RKPDSRSEVEPEPGH). Over residues 72 to 82 (LSHPLPSPESS) the composition is skewed to low complexity.

In terms of tissue distribution, specifically expressed in conidia.

Its subcellular location is the nucleus. In terms of biological role, transcription factor that regulates the expression of the gene clusters that mediate the biosynthesis of trypacidin, a metabolite with antiprotozoal activity and a possible role in the infection process. Trypacidin is toxic for human pulmonary and bronchial epithelial cells by initiating the intracellular formation of nitric oxide (NO) and hydrogen peroxide (H(2)O(2)), thus triggering host necrotic cell death. The polypeptide is Trypacidin cluster transcription factor (Aspergillus fumigatus (strain ATCC MYA-4609 / CBS 101355 / FGSC A1100 / Af293) (Neosartorya fumigata)).